Reading from the N-terminus, the 488-residue chain is UDP-glycosyltransferase 92A1 (488 aa).

UDP-alpha-D-glucose-binding positions include Ser292, Ala358–Gln360, His375–Glu383, and Ala397–Gln400.

Belongs to the UDP-glycosyltransferase family.

The protein is UDP-glycosyltransferase 92A1 (UGT92A1) of Arabidopsis thaliana (Mouse-ear cress).